Here is a 425-residue protein sequence, read N- to C-terminus: Elongation factor 1-alpha (425 aa).

A tr-type G domain is found at 5 to 221; it reads KPHMNLAVIG…DTFKEPSKPT (217 aa). Residues 14–21 form a G1 region; sequence GHIDHGKS. 14–21 lines the GTP pocket; sequence GHIDHGKS. Position 21 (S21) interacts with Mg(2+). The tract at residues 70 to 74 is G2; that stretch reads GITID. The tract at residues 91–94 is G3; it reads DCPG. GTP-binding positions include 91–95 and 146–149; these read DCPGH and NKMD. Positions 146–149 are G4; sequence NKMD. A G5 region spans residues 185 to 187; the sequence is SSL.

It belongs to the TRAFAC class translation factor GTPase superfamily. Classic translation factor GTPase family. EF-Tu/EF-1A subfamily.

The protein localises to the cytoplasm. It carries out the reaction GTP + H2O = GDP + phosphate + H(+). GTP hydrolase that promotes the GTP-dependent binding of aminoacyl-tRNA to the A-site of ribosomes during protein biosynthesis. This Methanoregula boonei (strain DSM 21154 / JCM 14090 / 6A8) protein is Elongation factor 1-alpha.